A 361-amino-acid polypeptide reads, in one-letter code: Aminomethyltransferase (361 aa).

Belongs to the GcvT family. The glycine cleavage system is composed of four proteins: P, T, L and H.

The enzyme catalyses N(6)-[(R)-S(8)-aminomethyldihydrolipoyl]-L-lysyl-[protein] + (6S)-5,6,7,8-tetrahydrofolate = N(6)-[(R)-dihydrolipoyl]-L-lysyl-[protein] + (6R)-5,10-methylene-5,6,7,8-tetrahydrofolate + NH4(+). Functionally, the glycine cleavage system catalyzes the degradation of glycine. This Herpetosiphon aurantiacus (strain ATCC 23779 / DSM 785 / 114-95) protein is Aminomethyltransferase.